The sequence spans 135 residues: MDDYEKLLERAIDQLPPEVFETKRFEVPKAYSVIQGNRTFIQNFREVADALNRDPQHLLKFLLRELGTAGNLEGGRAILQGKFTHFLINERIEDYVNKFVICHECNRPDTRIIREGRISLLKCEACGAKAPLKNV.

Belongs to the eIF-2-beta/eIF-5 family. In terms of assembly, heterotrimer composed of an alpha, a beta and a gamma chain.

EIF-2 functions in the early steps of protein synthesis by forming a ternary complex with GTP and initiator tRNA. The sequence is that of Translation initiation factor 2 subunit beta (eif2b) from Methanothermobacter thermautotrophicus (strain ATCC 29096 / DSM 1053 / JCM 10044 / NBRC 100330 / Delta H) (Methanobacterium thermoautotrophicum).